Here is a 377-residue protein sequence, read N- to C-terminus: 3-dehydroquinate synthase (377 aa).

Residues 113 to 117, 137 to 138, Lys150, and Lys159 each bind NAD(+); these read GVIGD and TT. Zn(2+) is bound by residues Glu192, His254, and His273.

It belongs to the sugar phosphate cyclases superfamily. Dehydroquinate synthase family. Co(2+) is required as a cofactor. Requires Zn(2+) as cofactor. NAD(+) serves as cofactor.

Its subcellular location is the cytoplasm. It catalyses the reaction 7-phospho-2-dehydro-3-deoxy-D-arabino-heptonate = 3-dehydroquinate + phosphate. It functions in the pathway metabolic intermediate biosynthesis; chorismate biosynthesis; chorismate from D-erythrose 4-phosphate and phosphoenolpyruvate: step 2/7. Functionally, catalyzes the conversion of 3-deoxy-D-arabino-heptulosonate 7-phosphate (DAHP) to dehydroquinate (DHQ). In Bartonella tribocorum (strain CIP 105476 / IBS 506), this protein is 3-dehydroquinate synthase.